A 161-amino-acid chain; its full sequence is Cytochrome c-type biogenesis protein CcmE (161 aa).

At 1 to 8 (MNARRKKR) the chain is on the cytoplasmic side. Residues 9–29 (LALATALIGGVAAIASLLLYA) traverse the membrane as a helical; Signal-anchor for type II membrane protein segment. Residues 30–161 (LNSNLNLFYT…DYNAEQKSGY (132 aa)) are Periplasmic-facing. Heme contacts are provided by His-131 and Tyr-135.

Belongs to the CcmE/CycJ family.

The protein localises to the cell inner membrane. In terms of biological role, heme chaperone required for the biogenesis of c-type cytochromes. Transiently binds heme delivered by CcmC and transfers the heme to apo-cytochromes in a process facilitated by CcmF and CcmH. This is Cytochrome c-type biogenesis protein CcmE from Shewanella woodyi (strain ATCC 51908 / MS32).